The sequence spans 652 residues: Phosphomethylpyrimidine synthase (652 aa).

Substrate-binding positions include N235, M264, Y293, H329, 349–351 (SRG), 390–393 (DGMR), and E429. H433 contacts Zn(2+). A substrate-binding site is contributed by Y456. H497 is a binding site for Zn(2+). Residues C577, C580, and C585 each contribute to the [4Fe-4S] cluster site.

Belongs to the ThiC family. Homodimer. [4Fe-4S] cluster serves as cofactor.

It catalyses the reaction 5-amino-1-(5-phospho-beta-D-ribosyl)imidazole + S-adenosyl-L-methionine = 4-amino-2-methyl-5-(phosphooxymethyl)pyrimidine + CO + 5'-deoxyadenosine + formate + L-methionine + 3 H(+). Its pathway is cofactor biosynthesis; thiamine diphosphate biosynthesis. Catalyzes the synthesis of the hydroxymethylpyrimidine phosphate (HMP-P) moiety of thiamine from aminoimidazole ribotide (AIR) in a radical S-adenosyl-L-methionine (SAM)-dependent reaction. The protein is Phosphomethylpyrimidine synthase of Shewanella sediminis (strain HAW-EB3).